Consider the following 544-residue polypeptide: NXPE family member 4 (544 aa).

The signal sequence occupies residues 1–27; that stretch reads MKISMINYKSLLALLFILASWIIFTVF. 7 N-linked (GlcNAc...) asparagine glycosylation sites follow: Asn-29, Asn-38, Asn-47, Asn-48, Asn-92, Asn-160, and Asn-210.

It belongs to the NXPE family.

It is found in the secreted. The polypeptide is NXPE family member 4 (NXPE4) (Homo sapiens (Human)).